We begin with the raw amino-acid sequence, 537 residues long: CTP synthase (537 aa).

The interval 1–265 (MTKYIFVTGG…GKYLTKRLKL (265 aa)) is amidoligase domain. Residue S13 coordinates CTP. S13 lines the UTP pocket. 14–19 (GLGKGI) contacts ATP. Position 54 (Y54) interacts with L-glutamine. D71 contacts ATP. Positions 71 and 139 each coordinate Mg(2+). CTP is bound by residues 146-148 (DIE), 186-191 (KTKPTQ), and K222. UTP is bound by residues 186 to 191 (KTKPTQ) and K222. A Glutamine amidotransferase type-1 domain is found at 290 to 532 (EIAIVGKYVK…VRAAKEYKQE (243 aa)). G351 contributes to the L-glutamine binding site. The active-site Nucleophile; for glutamine hydrolysis is C378. L-glutamine-binding positions include 379 to 382 (FGFQ), E402, and R459. Active-site residues include H505 and E507.

The protein belongs to the CTP synthase family. Homotetramer.

It catalyses the reaction UTP + L-glutamine + ATP + H2O = CTP + L-glutamate + ADP + phosphate + 2 H(+). It carries out the reaction L-glutamine + H2O = L-glutamate + NH4(+). The catalysed reaction is UTP + NH4(+) + ATP = CTP + ADP + phosphate + 2 H(+). It participates in pyrimidine metabolism; CTP biosynthesis via de novo pathway; CTP from UDP: step 2/2. Allosterically activated by GTP, when glutamine is the substrate; GTP has no effect on the reaction when ammonia is the substrate. The allosteric effector GTP functions by stabilizing the protein conformation that binds the tetrahedral intermediate(s) formed during glutamine hydrolysis. Inhibited by the product CTP, via allosteric rather than competitive inhibition. Catalyzes the ATP-dependent amination of UTP to CTP with either L-glutamine or ammonia as the source of nitrogen. Regulates intracellular CTP levels through interactions with the four ribonucleotide triphosphates. The protein is CTP synthase of Pyrococcus furiosus (strain ATCC 43587 / DSM 3638 / JCM 8422 / Vc1).